Reading from the N-terminus, the 92-residue chain is Large ribosomal subunit protein eL43 (92 aa).

Residues 39–60 (CSFCGKDSMKRAVVGIWSCKRC) form a C4-type zinc finger.

This sequence belongs to the eukaryotic ribosomal protein eL43 family.

The polypeptide is Large ribosomal subunit protein eL43 (RpL37A) (Drosophila melanogaster (Fruit fly)).